Here is a 519-residue protein sequence, read N- to C-terminus: Carboxyl-terminal-processing peptidase 3, chloroplastic (519 aa).

The PDZ domain maps to Tyr-186–Gly-274. Residues Ser-407 and Lys-432 each act as charge relay system in the active site.

Belongs to the peptidase S41A family.

It is found in the plastid. The protein resides in the chloroplast thylakoid lumen. It catalyses the reaction The enzyme shows specific recognition of a C-terminal tripeptide, Xaa-Yaa-Zaa, in which Xaa is preferably Ala or Leu, Yaa is preferably Ala or Tyr, and Zaa is preferably Ala, but then cleaves at a variable distance from the C-terminus. A typical cleavage is -Ala-Ala-|-Arg-Ala-Ala-Lys-Glu-Asn-Tyr-Ala-Leu-Ala-Ala.. Its function is as follows. Protease involved in the C-terminal processing of the chloroplastic D1 protein of photosystem II. This proteolytic processing is necessary to allow the light-driven assembly of the tetranuclear manganese cluster, which is responsible for photosynthetic water oxidation. The protein is Carboxyl-terminal-processing peptidase 3, chloroplastic (CTPA3) of Arabidopsis thaliana (Mouse-ear cress).